The following is a 242-amino-acid chain: Ubiquinone biosynthesis O-methyltransferase (242 aa).

Positions 44, 64, 85, and 129 each coordinate S-adenosyl-L-methionine.

Belongs to the methyltransferase superfamily. UbiG/COQ3 family.

It catalyses the reaction a 3-demethylubiquinol + S-adenosyl-L-methionine = a ubiquinol + S-adenosyl-L-homocysteine + H(+). The catalysed reaction is a 3-(all-trans-polyprenyl)benzene-1,2-diol + S-adenosyl-L-methionine = a 2-methoxy-6-(all-trans-polyprenyl)phenol + S-adenosyl-L-homocysteine + H(+). It functions in the pathway cofactor biosynthesis; ubiquinone biosynthesis. Its function is as follows. O-methyltransferase that catalyzes the 2 O-methylation steps in the ubiquinone biosynthetic pathway. In Klebsiella pneumoniae subsp. pneumoniae (strain ATCC 700721 / MGH 78578), this protein is Ubiquinone biosynthesis O-methyltransferase.